The chain runs to 906 residues: Protein translocase subunit SecA (906 aa).

Residues Gln89, Gly107–Thr111, and Asp502 contribute to the ATP site. A disordered region spans residues Val868–Asn887. Cys890, Cys892, Cys901, and His902 together coordinate Zn(2+).

This sequence belongs to the SecA family. Monomer and homodimer. Part of the essential Sec protein translocation apparatus which comprises SecA, SecYEG and auxiliary proteins SecDF-YajC and YidC. Zn(2+) serves as cofactor.

It localises to the cell inner membrane. The protein localises to the cytoplasm. The enzyme catalyses ATP + H2O + cellular proteinSide 1 = ADP + phosphate + cellular proteinSide 2.. Its function is as follows. Part of the Sec protein translocase complex. Interacts with the SecYEG preprotein conducting channel. Has a central role in coupling the hydrolysis of ATP to the transfer of proteins into and across the cell membrane, serving both as a receptor for the preprotein-SecB complex and as an ATP-driven molecular motor driving the stepwise translocation of polypeptide chains across the membrane. This Brucella melitensis biotype 1 (strain ATCC 23456 / CCUG 17765 / NCTC 10094 / 16M) protein is Protein translocase subunit SecA.